Here is an 81-residue protein sequence, read N- to C-terminus: Cytotoxin I-like P-15 (81 aa).

Positions 1-21 (MKTLLLTLAAATIVCLDLGYT) are cleaved as a signal peptide. Intrachain disulfides connect cysteine 24–cysteine 42, cysteine 35–cysteine 59, cysteine 63–cysteine 74, and cysteine 75–cysteine 80.

This sequence belongs to the three-finger toxin family. Short-chain subfamily. Type IA cytotoxin sub-subfamily. Monomer in solution; Homodimer and oligomer in the presence of negatively charged lipids forming a pore with a size ranging between 20 and 30 Angstroms. In terms of tissue distribution, expressed by the venom gland.

It is found in the secreted. The protein localises to the target cell membrane. Its function is as follows. Shows cytolytic activity on many different cells by forming pore in lipid membranes. In vivo, increases heart rate or kills the animal by cardiac arrest. In addition, it binds to heparin with high affinity, interacts with Kv channel-interacting protein 1 (KCNIP1) in a calcium-independent manner, and binds to integrin alpha-V/beta-3 (ITGAV/ITGB3) with moderate affinity. The chain is Cytotoxin I-like P-15 from Naja atra (Chinese cobra).